The sequence spans 456 residues: Bifunctional protein GlmU (456 aa).

The pyrophosphorylase stretch occupies residues 1–228 (MTLPLHVLIL…PQDVEGANDP (228 aa)). UDP-N-acetyl-alpha-D-glucosamine contacts are provided by residues 10 to 13 (LAAG), Lys24, Gln76, 81 to 82 (GT), 103 to 105 (YGD), Gly138, Glu153, Asn168, and Asn226. Mg(2+) is bound at residue Asp105. Mg(2+) is bound at residue Asn226. A linker region spans residues 229–249 (WQLAQLERAWQLRAARTLCLQ). The interval 250–456 (GVRMADPARV…GWKRPTKKSP (207 aa)) is N-acetyltransferase. Arg332 and Lys350 together coordinate UDP-N-acetyl-alpha-D-glucosamine. His362 serves as the catalytic Proton acceptor. 2 residues coordinate UDP-N-acetyl-alpha-D-glucosamine: Tyr365 and Asn376. Acetyl-CoA contacts are provided by residues Ala379, 385-386 (NY), Ser404, Ala422, and Arg439.

The protein in the N-terminal section; belongs to the N-acetylglucosamine-1-phosphate uridyltransferase family. It in the C-terminal section; belongs to the transferase hexapeptide repeat family. Homotrimer. Requires Mg(2+) as cofactor.

The protein resides in the cytoplasm. The catalysed reaction is alpha-D-glucosamine 1-phosphate + acetyl-CoA = N-acetyl-alpha-D-glucosamine 1-phosphate + CoA + H(+). It catalyses the reaction N-acetyl-alpha-D-glucosamine 1-phosphate + UTP + H(+) = UDP-N-acetyl-alpha-D-glucosamine + diphosphate. It functions in the pathway nucleotide-sugar biosynthesis; UDP-N-acetyl-alpha-D-glucosamine biosynthesis; N-acetyl-alpha-D-glucosamine 1-phosphate from alpha-D-glucosamine 6-phosphate (route II): step 2/2. It participates in nucleotide-sugar biosynthesis; UDP-N-acetyl-alpha-D-glucosamine biosynthesis; UDP-N-acetyl-alpha-D-glucosamine from N-acetyl-alpha-D-glucosamine 1-phosphate: step 1/1. The protein operates within bacterial outer membrane biogenesis; LPS lipid A biosynthesis. Functionally, catalyzes the last two sequential reactions in the de novo biosynthetic pathway for UDP-N-acetylglucosamine (UDP-GlcNAc). The C-terminal domain catalyzes the transfer of acetyl group from acetyl coenzyme A to glucosamine-1-phosphate (GlcN-1-P) to produce N-acetylglucosamine-1-phosphate (GlcNAc-1-P), which is converted into UDP-GlcNAc by the transfer of uridine 5-monophosphate (from uridine 5-triphosphate), a reaction catalyzed by the N-terminal domain. The sequence is that of Bifunctional protein GlmU from Xanthomonas axonopodis pv. citri (strain 306).